The following is a 275-amino-acid chain: Bis(5'-nucleosyl)-tetraphosphatase, symmetrical (275 aa).

Belongs to the Ap4A hydrolase family.

It catalyses the reaction P(1),P(4)-bis(5'-adenosyl) tetraphosphate + H2O = 2 ADP + 2 H(+). Functionally, hydrolyzes diadenosine 5',5'''-P1,P4-tetraphosphate to yield ADP. This chain is Bis(5'-nucleosyl)-tetraphosphatase, symmetrical, found in Stutzerimonas stutzeri (strain A1501) (Pseudomonas stutzeri).